Consider the following 559-residue polypeptide: Glucose-6-phosphate isomerase (559 aa).

Residue E363 is the Proton donor of the active site. Active-site residues include H394 and K523.

This sequence belongs to the GPI family.

It localises to the cytoplasm. The catalysed reaction is alpha-D-glucose 6-phosphate = beta-D-fructose 6-phosphate. The protein operates within carbohydrate biosynthesis; gluconeogenesis. It participates in carbohydrate degradation; glycolysis; D-glyceraldehyde 3-phosphate and glycerone phosphate from D-glucose: step 2/4. Functionally, catalyzes the reversible isomerization of glucose-6-phosphate to fructose-6-phosphate. This chain is Glucose-6-phosphate isomerase, found in Bartonella henselae (strain ATCC 49882 / DSM 28221 / CCUG 30454 / Houston 1) (Rochalimaea henselae).